A 436-amino-acid polypeptide reads, in one-letter code: Adenosylhomocysteinase (436 aa).

Thr62, Asp136, and Glu161 together coordinate substrate. 162–164 serves as a coordination point for NAD(+); the sequence is TTT. Residues Lys191 and Asp195 each coordinate substrate. NAD(+)-binding positions include Asn196, 225–230, Glu248, Asn283, 304–306, and Asn352; these read GFGDVG and IGH.

It belongs to the adenosylhomocysteinase family. The cofactor is NAD(+).

It is found in the cytoplasm. It carries out the reaction S-adenosyl-L-homocysteine + H2O = L-homocysteine + adenosine. It participates in amino-acid biosynthesis; L-homocysteine biosynthesis; L-homocysteine from S-adenosyl-L-homocysteine: step 1/1. May play a key role in the regulation of the intracellular concentration of adenosylhomocysteine. The protein is Adenosylhomocysteinase of Leptospira borgpetersenii serovar Hardjo-bovis (strain JB197).